The sequence spans 426 residues: Hemojuvelin (426 aa).

A signal peptide spans 1–35 (MGEPGQSPSPRSSHGSPPTLSTLTLLLLLCGHAHS). The residue at position 46 (Tyr-46) is a Phosphotyrosine. An N-linked (GlcNAc...) asparagine glycan is attached at Asn-118. A disordered region spans residues 119-142 (CSRQGPTAPPPPRGPALPGAGSGL). Intrachain disulfides connect Cys-148/Cys-230 and Cys-167/Cys-317. N-linked (GlcNAc...) asparagine glycans are attached at residues Asn-213 and Asn-372. Residue Asp-400 is the site of GPI-anchor amidated aspartate attachment. The propeptide at 401–426 (AGVPLSSATLLAPLLSGLFVLWLCIQ) is removed in mature form.

Belongs to the repulsive guidance molecule (RGM) family. In terms of assembly, interacts with BMP2 and BMP4. Interacts with BMP6. Interacts with BMPR1B. Interacts with TMPRSS6. In terms of processing, autocatalytically cleaved at low pH; the two chains remain linked via two disulfide bonds. Also proteolytically processed by TMPRSS6, several fragments being released in the extracellular space; regulates HJV activity in BMP signaling and thefore iron homeostasis. As to expression, adult and fetal liver, heart, and skeletal muscle.

The protein localises to the cell membrane. Its function is as follows. Acts as a bone morphogenetic protein (BMP) coreceptor. Through enhancement of BMP signaling regulates hepcidin (HAMP) expression and regulates iron homeostasis. This is Hemojuvelin from Homo sapiens (Human).